We begin with the raw amino-acid sequence, 715 residues long: Phosphatidylinositol 4-phosphate 5-kinase 6 (715 aa).

Positions 1–13 are enriched in basic and acidic residues; that stretch reads MSVAHADDADDYS. Positions 1–21 are disordered; it reads MSVAHADDADDYSRPTGESYH. MORN repeat units follow at residues 32-54, 55-77, 78-100, 101-123, 124-146, 147-169, 170-192, and 193-214; these read YTGQ…DGCM, YVGD…SGAT, YEGD…SGDL, YRGS…NGDC, YDGE…NENH, YIGQ…NGNR, YDGS…DGSF, and YVGV…STSS. The disordered stretch occupies residues 253 to 306; it reads GASEQSSSGNRTKNSERPRRRSVDGRVSNGEMELRSNGSGYLQVDDNAESTRSS. Residues 255-264 show a composition bias toward polar residues; the sequence is SEQSSSGNRT. A compositionally biased stretch (basic and acidic residues) spans 265–276; it reads KNSERPRRRSVD. The 391-residue stretch at 321-711 folds into the PIPK domain; sequence TISKGHKNYE…RFRDFIFRVF (391 aa). The segment at 671–692 is activation loop; sequence YDISKKLEHAYKSMQYDPTSIS.

The catalysed reaction is a 1,2-diacyl-sn-glycero-3-phospho-(1D-myo-inositol 4-phosphate) + ATP = a 1,2-diacyl-sn-glycero-3-phospho-(1D-myo-inositol-4,5-bisphosphate) + ADP + H(+). This Arabidopsis thaliana (Mouse-ear cress) protein is Phosphatidylinositol 4-phosphate 5-kinase 6 (PIP5K6).